The chain runs to 331 residues: Ribose operon repressor (331 aa).

Residues 1 to 56 (MTTIRDVAKHAKVSVATVSRVLNKKGYVSKEAEEAVLQAIKELNYQPSSVARSLYH) form the HTH lacI-type domain. A DNA-binding region (H-T-H motif) is located at residues 4-23 (IRDVAKHAKVSVATVSRVLN).

In terms of biological role, transcriptional repressor for the ribose rbsDACBK operon. The protein is Ribose operon repressor (rbsR) of Halalkalibacterium halodurans (strain ATCC BAA-125 / DSM 18197 / FERM 7344 / JCM 9153 / C-125) (Bacillus halodurans).